A 353-amino-acid chain; its full sequence is UDP-3-O-acylglucosamine N-acyltransferase (353 aa).

The active-site Proton acceptor is His242.

This sequence belongs to the transferase hexapeptide repeat family. LpxD subfamily. As to quaternary structure, homotrimer.

The catalysed reaction is a UDP-3-O-[(3R)-3-hydroxyacyl]-alpha-D-glucosamine + a (3R)-hydroxyacyl-[ACP] = a UDP-2-N,3-O-bis[(3R)-3-hydroxyacyl]-alpha-D-glucosamine + holo-[ACP] + H(+). The protein operates within bacterial outer membrane biogenesis; LPS lipid A biosynthesis. In terms of biological role, catalyzes the N-acylation of UDP-3-O-acylglucosamine using 3-hydroxyacyl-ACP as the acyl donor. Is involved in the biosynthesis of lipid A, a phosphorylated glycolipid that anchors the lipopolysaccharide to the outer membrane of the cell. This Pseudomonas aeruginosa (strain UCBPP-PA14) protein is UDP-3-O-acylglucosamine N-acyltransferase.